Here is a 360-residue protein sequence, read N- to C-terminus: Peptide chain release factor 1 (360 aa).

Glutamine 235 bears the N5-methylglutamine mark.

It belongs to the prokaryotic/mitochondrial release factor family. Post-translationally, methylated by PrmC. Methylation increases the termination efficiency of RF1.

It is found in the cytoplasm. Functionally, peptide chain release factor 1 directs the termination of translation in response to the peptide chain termination codons UAG and UAA. This is Peptide chain release factor 1 from Bordetella pertussis (strain Tohama I / ATCC BAA-589 / NCTC 13251).